The primary structure comprises 460 residues: Bifunctional protein GlmU (460 aa).

Residues 1–229 (MTNYAIILAA…FNESLGVNDR (229 aa)) form a pyrophosphorylase region. UDP-N-acetyl-alpha-D-glucosamine is bound by residues 8 to 11 (LAAG), lysine 22, glutamine 72, and 77 to 78 (GT). Residue aspartate 102 participates in Mg(2+) binding. UDP-N-acetyl-alpha-D-glucosamine contacts are provided by glycine 139, glutamate 154, asparagine 169, and asparagine 227. Asparagine 227 contacts Mg(2+). The interval 230-250 (VALATAETVMRQRITQKHMVN) is linker. The interval 251–460 (GVTFHNPETV…RLAHHPSRSK (210 aa)) is N-acetyltransferase. UDP-N-acetyl-alpha-D-glucosamine-binding residues include arginine 332 and lysine 350. The active-site Proton acceptor is histidine 362. UDP-N-acetyl-alpha-D-glucosamine-binding residues include tyrosine 365 and asparagine 376. Acetyl-CoA is bound by residues alanine 379, 385–386 (NY), serine 404, alanine 422, and arginine 439.

It in the N-terminal section; belongs to the N-acetylglucosamine-1-phosphate uridyltransferase family. This sequence in the C-terminal section; belongs to the transferase hexapeptide repeat family. As to quaternary structure, homotrimer. Mg(2+) is required as a cofactor.

The protein resides in the cytoplasm. The enzyme catalyses alpha-D-glucosamine 1-phosphate + acetyl-CoA = N-acetyl-alpha-D-glucosamine 1-phosphate + CoA + H(+). The catalysed reaction is N-acetyl-alpha-D-glucosamine 1-phosphate + UTP + H(+) = UDP-N-acetyl-alpha-D-glucosamine + diphosphate. It functions in the pathway nucleotide-sugar biosynthesis; UDP-N-acetyl-alpha-D-glucosamine biosynthesis; N-acetyl-alpha-D-glucosamine 1-phosphate from alpha-D-glucosamine 6-phosphate (route II): step 2/2. Its pathway is nucleotide-sugar biosynthesis; UDP-N-acetyl-alpha-D-glucosamine biosynthesis; UDP-N-acetyl-alpha-D-glucosamine from N-acetyl-alpha-D-glucosamine 1-phosphate: step 1/1. It participates in bacterial outer membrane biogenesis; LPS lipid A biosynthesis. Its function is as follows. Catalyzes the last two sequential reactions in the de novo biosynthetic pathway for UDP-N-acetylglucosamine (UDP-GlcNAc). The C-terminal domain catalyzes the transfer of acetyl group from acetyl coenzyme A to glucosamine-1-phosphate (GlcN-1-P) to produce N-acetylglucosamine-1-phosphate (GlcNAc-1-P), which is converted into UDP-GlcNAc by the transfer of uridine 5-monophosphate (from uridine 5-triphosphate), a reaction catalyzed by the N-terminal domain. In Streptococcus pyogenes serotype M49 (strain NZ131), this protein is Bifunctional protein GlmU.